Consider the following 574-residue polypeptide: NADH-ubiquinone oxidoreductase chain 5 (574 aa).

16 helical membrane passes run 10-30 (VASK…LYMV), 50-70 (MMMT…VVMI), 87-107 (FINR…MLIF), 111-131 (LIIL…LVIY), 141-161 (GMIT…AIAW), 181-203 (YQAL…SSWL), 211-231 (TPVS…FLLI), 240-260 (VWWF…MAGL), 280-300 (LGMM…FHMV), 301-321 (THAM…HSHM), 340-360 (TSCL…SGFY), 381-401 (LILF…MCVV), 423-443 (MLLL…ILPL), 458-478 (TLML…TTNM), 489-509 (IINY…QFMM), and 554-574 (TPMN…LVAI).

This sequence belongs to the complex I subunit 5 family.

Its subcellular location is the mitochondrion inner membrane. It carries out the reaction a ubiquinone + NADH + 5 H(+)(in) = a ubiquinol + NAD(+) + 4 H(+)(out). Its function is as follows. Core subunit of the mitochondrial membrane respiratory chain NADH dehydrogenase (Complex I) that is believed to belong to the minimal assembly required for catalysis. Complex I functions in the transfer of electrons from NADH to the respiratory chain. The immediate electron acceptor for the enzyme is believed to be ubiquinone. This is NADH-ubiquinone oxidoreductase chain 5 (ND5) from Lumbricus terrestris (Common earthworm).